Here is a 359-residue protein sequence, read N- to C-terminus: 3-dehydroquinate synthase (359 aa).

NAD(+) is bound by residues 71-76 (DGEQFK), 105-109 (GVIGD), 129-130 (TT), K142, K151, and 169-172 (CLHT). Zn(2+)-binding residues include E184, H247, and H264.

The protein belongs to the sugar phosphate cyclases superfamily. Dehydroquinate synthase family. The cofactor is Co(2+). It depends on Zn(2+) as a cofactor. NAD(+) serves as cofactor.

It is found in the cytoplasm. It catalyses the reaction 7-phospho-2-dehydro-3-deoxy-D-arabino-heptonate = 3-dehydroquinate + phosphate. The protein operates within metabolic intermediate biosynthesis; chorismate biosynthesis; chorismate from D-erythrose 4-phosphate and phosphoenolpyruvate: step 2/7. In terms of biological role, catalyzes the conversion of 3-deoxy-D-arabino-heptulosonate 7-phosphate (DAHP) to dehydroquinate (DHQ). The sequence is that of 3-dehydroquinate synthase from Shewanella sp. (strain W3-18-1).